The primary structure comprises 130 residues: Small ribosomal subunit protein uS8 (130 aa).

It belongs to the universal ribosomal protein uS8 family. In terms of assembly, part of the 30S ribosomal subunit.

Its function is as follows. One of the primary rRNA binding proteins, it binds directly to 16S rRNA central domain where it helps coordinate assembly of the platform of the 30S subunit. In Methanococcus voltae, this protein is Small ribosomal subunit protein uS8.